The following is a 132-amino-acid chain: Cytochrome B5 isoform C (132 aa).

One can recognise a Cytochrome b5 heme-binding domain in the interval 2 to 78 (ANLISFHDVA…MKKYCIGDVD (77 aa)). Positions 37 and 61 each coordinate heme. The helical transmembrane segment at 110 to 129 (LLIYLIPLLILGVAFALRFY) threads the bilayer.

The protein belongs to the cytochrome b5 family. As to quaternary structure, interacts with CER1, BI-1, FAH1 and FAH2.

Its subcellular location is the endoplasmic reticulum membrane. Its function is as follows. Membrane bound hemoprotein which function as an electron carrier for several membrane bound oxygenases, including fatty acid desaturases. This Arabidopsis thaliana (Mouse-ear cress) protein is Cytochrome B5 isoform C.